Here is a 110-residue protein sequence, read N- to C-terminus: UPF0132 membrane protein MJ1443 (110 aa).

3 helical membrane-spanning segments follow: residues 15-35, 49-69, and 70-90; these read IEGA…YILE, IILF…PYGW, and MLSG…MYKA.

This sequence belongs to the UPF0132 family.

It localises to the cell membrane. The polypeptide is UPF0132 membrane protein MJ1443 (Methanocaldococcus jannaschii (strain ATCC 43067 / DSM 2661 / JAL-1 / JCM 10045 / NBRC 100440) (Methanococcus jannaschii)).